A 105-amino-acid polypeptide reads, in one-letter code: Pyrimidine/purine nucleoside phosphorylase (105 aa).

The protein belongs to the nucleoside phosphorylase PpnP family.

The catalysed reaction is a purine D-ribonucleoside + phosphate = a purine nucleobase + alpha-D-ribose 1-phosphate. It carries out the reaction adenosine + phosphate = alpha-D-ribose 1-phosphate + adenine. The enzyme catalyses cytidine + phosphate = cytosine + alpha-D-ribose 1-phosphate. It catalyses the reaction guanosine + phosphate = alpha-D-ribose 1-phosphate + guanine. The catalysed reaction is inosine + phosphate = alpha-D-ribose 1-phosphate + hypoxanthine. It carries out the reaction thymidine + phosphate = 2-deoxy-alpha-D-ribose 1-phosphate + thymine. The enzyme catalyses uridine + phosphate = alpha-D-ribose 1-phosphate + uracil. It catalyses the reaction xanthosine + phosphate = alpha-D-ribose 1-phosphate + xanthine. Catalyzes the phosphorolysis of diverse nucleosides, yielding D-ribose 1-phosphate and the respective free bases. Can use uridine, adenosine, guanosine, cytidine, thymidine, inosine and xanthosine as substrates. Also catalyzes the reverse reactions. In Ralstonia nicotianae (strain ATCC BAA-1114 / GMI1000) (Ralstonia solanacearum), this protein is Pyrimidine/purine nucleoside phosphorylase.